The following is a 182-amino-acid chain: Transmembrane and coiled-coil domain-containing protein 2 (182 aa).

Helical transmembrane passes span 10–30 (IIIDYLSLSSIWNYLQATLLG) and 50–70 (VQVILGISFLILLGVGMYALW). Residues 122–149 (GLQEKILKKLQTVENKVKDLEGMIISQK) adopt a coiled-coil conformation.

The protein localises to the membrane. This is Transmembrane and coiled-coil domain-containing protein 2 (TMCO2) from Bos taurus (Bovine).